The chain runs to 603 residues: Aquaporin-2 (603 aa).

A helical membrane pass occupies residues 40–70 (SLKKYKYNLFFEFIGSFLFVFFISIYMLNSN). Composition is skewed to basic and acidic residues over residues 135-149 (NNKS…DDKI) and 156-190 (EFEK…EDPK). The disordered stretch occupies residues 135 to 200 (NNKSKREVER…NISNKNENYD (66 aa)). The segment covering 191 to 200 (NISNKNENYD) has biased composition (polar residues). 5 helical membrane passes run 282-299 (HAIY…FILL), 321-346 (FALS…AHLY), 360-393 (IIKT…EENK), 442-471 (NKYI…VTNT), and 509-542 (ITKI…FLSL).

This sequence belongs to the MIP/aquaporin (TC 1.A.8) family.

The protein resides in the endomembrane system. The catalysed reaction is H2O(in) = H2O(out). It carries out the reaction glycerol(in) = glycerol(out). Required for sporozoite development in the mosquito vector. This is Aquaporin-2 from Plasmodium falciparum (isolate NF54).